A 421-amino-acid chain; its full sequence is Tyrosine--tRNA ligase (421 aa).

Tyr-36 contributes to the L-tyrosine binding site. The 'HIGH' region signature appears at 41-50 (PTADSLHIGH). Residues Tyr-170 and Gln-174 each coordinate L-tyrosine. A 'KMSKS' region motif is present at residues 231 to 235 (KFGKS). Lys-234 is a binding site for ATP. The 68-residue stretch at 353-420 (TNIVEALIET…KKKYFMVNYQ (68 aa)) folds into the S4 RNA-binding domain.

Belongs to the class-I aminoacyl-tRNA synthetase family. TyrS type 1 subfamily. In terms of assembly, homodimer.

Its subcellular location is the cytoplasm. The catalysed reaction is tRNA(Tyr) + L-tyrosine + ATP = L-tyrosyl-tRNA(Tyr) + AMP + diphosphate + H(+). Catalyzes the attachment of tyrosine to tRNA(Tyr) in a two-step reaction: tyrosine is first activated by ATP to form Tyr-AMP and then transferred to the acceptor end of tRNA(Tyr). This Staphylococcus epidermidis (strain ATCC 35984 / DSM 28319 / BCRC 17069 / CCUG 31568 / BM 3577 / RP62A) protein is Tyrosine--tRNA ligase.